Consider the following 445-residue polypeptide: CBL-interacting serine/threonine-protein kinase 8 (445 aa).

The Protein kinase domain occupies 9 to 262; the sequence is YELGRTIGEG…IAEIRKDEWF (254 aa). ATP is bound by residues 15 to 23 and Lys-38; that span reads IGEGTFAKV. Asp-132 serves as the catalytic Proton acceptor. The interval 150 to 177 is activation loop; that stretch reads DFGLSALPEQGVTILKTTCGTPNYVAPE. Ser-154 bears the Phosphoserine mark. Thr-166 is subject to Phosphothreonine. One can recognise an NAF domain in the interval 302–326; it reads TGPLTLNAFDLIILSQGLNLATLFD. The PPI stretch occupies residues 333–362; it reads KHQTRFISHKPANVVLSSMEVVSQSMGFKT.

This sequence belongs to the protein kinase superfamily. CAMK Ser/Thr protein kinase family. SNF1 subfamily. In terms of assembly, interacts with CBL1 and CBL9. The cofactor is Mn(2+). As to expression, mostly expressed in roots, and, to a lower extent, in leaves, stems, flowers, and siliques.

It catalyses the reaction L-seryl-[protein] + ATP = O-phospho-L-seryl-[protein] + ADP + H(+). The enzyme catalyses L-threonyl-[protein] + ATP = O-phospho-L-threonyl-[protein] + ADP + H(+). Functionally, CIPK serine-threonine protein kinases interact with CBL proteins. Binding of a CBL protein to the regulatory NAF domain of CIPK protein lead to the activation of the kinase in a calcium-dependent manner. The sequence is that of CBL-interacting serine/threonine-protein kinase 8 (CIPK8) from Arabidopsis thaliana (Mouse-ear cress).